The primary structure comprises 301 residues: Probable aspartoacylase (301 aa).

Residues histidine 13 and glutamate 16 each coordinate Zn(2+). Substrate is bound by residues arginine 54 and 61–62 (NR). Residue histidine 105 participates in Zn(2+) binding. The substrate site is built by glutamate 163 and tyrosine 273.

It belongs to the AspA/AstE family. Aspartoacylase subfamily. Zn(2+) is required as a cofactor.

The catalysed reaction is an N-acyl-L-aspartate + H2O = a carboxylate + L-aspartate. This Prochlorococcus marinus (strain AS9601) protein is Probable aspartoacylase.